The sequence spans 354 residues: Uroporphyrinogen decarboxylase (354 aa).

Residues 27-31, aspartate 77, tyrosine 154, threonine 209, and histidine 327 each bind substrate; that span reads RQAGR.

The protein belongs to the uroporphyrinogen decarboxylase family. Homodimer.

It localises to the cytoplasm. The catalysed reaction is uroporphyrinogen III + 4 H(+) = coproporphyrinogen III + 4 CO2. It functions in the pathway porphyrin-containing compound metabolism; protoporphyrin-IX biosynthesis; coproporphyrinogen-III from 5-aminolevulinate: step 4/4. Catalyzes the decarboxylation of four acetate groups of uroporphyrinogen-III to yield coproporphyrinogen-III. The chain is Uroporphyrinogen decarboxylase from Enterobacter sp. (strain 638).